The chain runs to 473 residues: MAP kinase-activated protein kinase 5 (473 aa).

The Protein kinase domain occupies 22–304 (INWTQKLGAG…IEGVLDHPWL (283 aa)). ATP is bound by residues 28-36 (LGAGISGPV) and lysine 51. Position 115 is a phosphoserine; by PKA (serine 115). Residue aspartate 148 is the Proton acceptor of the active site. Threonine 182 carries the phosphothreonine; by MAPK11, MAPK14, MAPK4, MAPK6 and PKA modification. 2 positions are modified to phosphoserine: serine 212 and serine 354. Positions 409–440 (ENEDEKLNEVMQEAWKYNRECKLLRDTLQSFS) form a coiled coil.

Belongs to the protein kinase superfamily. CAMK Ser/Thr protein kinase family. In terms of assembly, interacts with ERK3/MAPK6 and ERK4/MAPK4 (via FRIEDE motif); the interaction is direct. Interacts with YWHAE; the interaction prevents phosphorylation of HSP27/HSPB1 leading to disrupt F-actin polymerization. Interacts with SQSTM1. In terms of processing, phosphorylated on Thr-182 ERK3/MAPK6 or ERK4/MAPK4; which is the regulatory phosphorylation site and is located on the T-loop/loop 12, leading to activation. Phosphorylation at Thr-182 by p38-alpha/MAPK14, p38-beta/MAPK11 is subject to debate. Phosphorylated at Ser-115 by PKA/PRKACA, leading to localization to the cytoplasm. Autophosphorylated. Expressed ubiquitously.

It is found in the cytoplasm. The protein resides in the nucleus. The catalysed reaction is L-seryl-[protein] + ATP = O-phospho-L-seryl-[protein] + ADP + H(+). It catalyses the reaction L-threonyl-[protein] + ATP = O-phospho-L-threonyl-[protein] + ADP + H(+). Its activity is regulated as follows. Activated following phosphorylation at Thr-182 by p38-alpha/MAPK14, p38-beta/MAPK11, ERK2/MAPK1, ERK3/MAPK6, and ERK4/MAPK4. Activated by stress-related extracellular stimuli; such as H(2)O(2), arsenite, anisomycin TNF alpha and also PMA and the calcium ionophore A23187; but to a lesser extent. In vitro, activated by SQSTM1. Inhibited by diterpenoid alkaloid noroxoaconitine. Tumor suppressor serine/threonine-protein kinase involved in mTORC1 signaling and post-transcriptional regulation. Phosphorylates FOXO3, ERK3/MAPK6, ERK4/MAPK4, HSP27/HSPB1, p53/TP53 and RHEB. Acts as a tumor suppressor by mediating Ras-induced senescence and phosphorylating p53/TP53. Involved in post-transcriptional regulation of MYC by mediating phosphorylation of FOXO3: phosphorylation of FOXO3 leads to promote nuclear localization of FOXO3, enabling expression of miR-34b and miR-34c, 2 post-transcriptional regulators of MYC that bind to the 3'UTR of MYC transcript and prevent MYC translation. Acts as a negative regulator of mTORC1 signaling by mediating phosphorylation and inhibition of RHEB. Part of the atypical MAPK signaling via its interaction with ERK3/MAPK6 or ERK4/MAPK4: the precise role of the complex formed with ERK3/MAPK6 or ERK4/MAPK4 is still unclear, but the complex follows a complex set of phosphorylation events: upon interaction with atypical MAPK (ERK3/MAPK6 or ERK4/MAPK4), ERK3/MAPK6 (or ERK4/MAPK4) is phosphorylated and then mediates phosphorylation and activation of MAPKAPK5, which in turn phosphorylates ERK3/MAPK6 (or ERK4/MAPK4). Mediates phosphorylation of HSP27/HSPB1 in response to PKA/PRKACA stimulation, inducing F-actin rearrangement. The polypeptide is MAP kinase-activated protein kinase 5 (MAPKAPK5) (Homo sapiens (Human)).